The chain runs to 485 residues: Cysteine--tRNA ligase (485 aa).

Zn(2+) is bound at residue Cys29. Positions 31 to 41 (VTVYDHCHIGH) match the 'HIGH' region motif. Positions 209, 234, and 238 each coordinate Zn(2+). The 'KMSKS' region signature appears at 266-270 (KMSKS). Residue Lys269 participates in ATP binding.

This sequence belongs to the class-I aminoacyl-tRNA synthetase family. As to quaternary structure, monomer. Requires Zn(2+) as cofactor.

The protein resides in the cytoplasm. It catalyses the reaction tRNA(Cys) + L-cysteine + ATP = L-cysteinyl-tRNA(Cys) + AMP + diphosphate. The polypeptide is Cysteine--tRNA ligase (Geobacter metallireducens (strain ATCC 53774 / DSM 7210 / GS-15)).